A 309-amino-acid polypeptide reads, in one-letter code: Taste receptor type 2 member 114 (309 aa).

At 1-7 (MLGAMEG) the chain is on the extracellular side. Residues 8 to 28 (VLLSVATSEALLGIVGNTFIA) form a helical membrane-spanning segment. Over 29–43 (LVNCMDCTRNKNLYN) the chain is Cytoplasmic. Residues 44-64 (IGFILTGLAISRICLVWILIT) form a helical membrane-spanning segment. Over 65–87 (EAYIKIFSPQLLSPINIIELISY) the chain is Extracellular. Residues 88 to 108 (LWIITSQLNVWFATSLSIFYF) form a helical membrane-spanning segment. Residues 109-127 (LKIANFSHHIFLWLKRRIN) lie on the Cytoplasmic side of the membrane. Residues 128–148 (IVFAFLIGCLLMSWLFSFPVV) form a helical membrane-spanning segment. The Extracellular segment spans residues 149-182 (VKMVKDKKMLYINSSWQIHMKKSELIINYVFTNG). An N-linked (GlcNAc...) asparagine glycan is attached at asparagine 161. The chain crosses the membrane as a helical span at residues 183–203 (GVFLLFIIMLIVCFLLIISLW). At 204–233 (RHSKWMQSNESGFRDLNTEVHVKTIKVLLS) the chain is on the cytoplasmic side. The chain crosses the membrane as a helical span at residues 234 to 254 (FIILFILHLIGITINVICLLV). Residues 255–259 (PENNL) lie on the Extracellular side of the membrane. A helical membrane pass occupies residues 260–280 (LFVFGLTIAFLYPCCHSLILI). The Cytoplasmic segment spans residues 281-309 (LANSRLKRCFVRILQQLMCSEEGKEFRNT).

It belongs to the G-protein coupled receptor T2R family.

It localises to the membrane. In terms of biological role, putative taste receptor which may play a role in the perception of bitterness. This is Taste receptor type 2 member 114 from Rattus norvegicus (Rat).